Reading from the N-terminus, the 471-residue chain is MTDLPDSTRWQLWIVAFGFFMQSLDTTIVNTALPSMAQSLGESPLHMHMVIVSYVLTVAVMLPASGWLADKVGVRNIFFTAIVLFTLGSLFCALSGTLNELLLARALQGVGGAMMVPVGRLTVMKIVPREQYMAAMTFVTLPGQVGPLLGPALGGLLVEYASWHWIFLINIPVGIIGAIATLMLMPNYTMQTRRFDLSGFLLLAVGMAVLTLALDGSKGTGLSPLTIAGLVAVGVVALVLYLLHARNNNRALFSLKLFRTRTFSLGLAGSFAGRIGSGMLPFMTPVFLQIGLGFSPFHAGLMMIPMVLGSMGMKRIVVQVVNCFGYRRVLVATTLGLSLVTLLFMTTALLGWYYVLPFVLFLQGMVNSTRFSSMNTLTLKDLPDNLASSGNSLLSMIMQLSMSIGVTIAGLLLGLFGSQHVSVDSGTTQTVFMYTWLSMALIIALPAFIFARVPNDTHQNVAISRRKRSAQ.

Residues 1–11 (MTDLPDSTRWQ) lie on the Periplasmic side of the membrane. The helical transmembrane segment at 12 to 32 (LWIVAFGFFMQSLDTTIVNTA) threads the bilayer. Topologically, residues 33-48 (LPSMAQSLGESPLHMH) are cytoplasmic. A helical transmembrane segment spans residues 49-69 (MVIVSYVLTVAVMLPASGWLA). Topologically, residues 70-76 (DKVGVRN) are periplasmic. Residues 77 to 97 (IFFTAIVLFTLGSLFCALSGT) traverse the membrane as a helical segment. Residues 98-101 (LNEL) are Cytoplasmic-facing. A helical membrane pass occupies residues 102–124 (LLARALQGVGGAMMVPVGRLTVM). Residues 125 to 137 (KIVPREQYMAAMT) are Periplasmic-facing. The chain crosses the membrane as a helical span at residues 138–158 (FVTLPGQVGPLLGPALGGLLV). The Cytoplasmic segment spans residues 159-164 (EYASWH). The helical transmembrane segment at 165 to 185 (WIFLINIPVGIIGAIATLMLM) threads the bilayer. At 186–196 (PNYTMQTRRFD) the chain is on the periplasmic side. A helical membrane pass occupies residues 197 to 217 (LSGFLLLAVGMAVLTLALDGS). Residues 218–224 (KGTGLSP) are Cytoplasmic-facing. Residues 225-245 (LTIAGLVAVGVVALVLYLLHA) traverse the membrane as a helical segment. The Periplasmic portion of the chain corresponds to 246 to 262 (RNNNRALFSLKLFRTRT). A helical transmembrane segment spans residues 263–283 (FSLGLAGSFAGRIGSGMLPFM). At 284 to 285 (TP) the chain is on the cytoplasmic side. The helical transmembrane segment at 286–306 (VFLQIGLGFSPFHAGLMMIPM) threads the bilayer. The Periplasmic portion of the chain corresponds to 307–341 (VLGSMGMKRIVVQVVNCFGYRRVLVATTLGLSLVT). A helical transmembrane segment spans residues 342–362 (LLFMTTALLGWYYVLPFVLFL). Residues 363–395 (QGMVNSTRFSSMNTLTLKDLPDNLASSGNSLLS) lie on the Cytoplasmic side of the membrane. Residues 396 to 416 (MIMQLSMSIGVTIAGLLLGLF) form a helical membrane-spanning segment. Topologically, residues 417–430 (GSQHVSVDSGTTQT) are periplasmic. A helical transmembrane segment spans residues 431-451 (VFMYTWLSMALIIALPAFIFA). The Cytoplasmic portion of the chain corresponds to 452-471 (RVPNDTHQNVAISRRKRSAQ).

This sequence belongs to the major facilitator superfamily. TCR/Tet family.

The protein resides in the cell inner membrane. The protein is Putative multidrug resistance protein MdtD of Escherichia coli O139:H28 (strain E24377A / ETEC).